We begin with the raw amino-acid sequence, 226 residues long: Ribonuclease 3 (226 aa).

One can recognise an RNase III domain in the interval 6 to 128 (ANKIQQILGY…LIGSIYLDSN (123 aa)). Glu41 serves as a coordination point for Mg(2+). Residue Asp45 is part of the active site. Positions 114 and 117 each coordinate Mg(2+). Residue Glu117 is part of the active site. The DRBM domain maps to 155 to 225 (DPKTRLQEYL…ARKALIKLGV (71 aa)).

This sequence belongs to the ribonuclease III family. As to quaternary structure, homodimer. The cofactor is Mg(2+).

The protein resides in the cytoplasm. The enzyme catalyses Endonucleolytic cleavage to 5'-phosphomonoester.. In terms of biological role, digests double-stranded RNA. Involved in the processing of primary rRNA transcript to yield the immediate precursors to the large and small rRNAs (23S and 16S). Processes some mRNAs, and tRNAs when they are encoded in the rRNA operon. Processes pre-crRNA and tracrRNA of type II CRISPR loci if present in the organism. The chain is Ribonuclease 3 from Buchnera aphidicola subsp. Schizaphis graminum (strain Sg).